The primary structure comprises 157 residues: SsrA-binding protein (157 aa).

Belongs to the SmpB family.

The protein resides in the cytoplasm. Required for rescue of stalled ribosomes mediated by trans-translation. Binds to transfer-messenger RNA (tmRNA), required for stable association of tmRNA with ribosomes. tmRNA and SmpB together mimic tRNA shape, replacing the anticodon stem-loop with SmpB. tmRNA is encoded by the ssrA gene; the 2 termini fold to resemble tRNA(Ala) and it encodes a 'tag peptide', a short internal open reading frame. During trans-translation Ala-aminoacylated tmRNA acts like a tRNA, entering the A-site of stalled ribosomes, displacing the stalled mRNA. The ribosome then switches to translate the ORF on the tmRNA; the nascent peptide is terminated with the 'tag peptide' encoded by the tmRNA and targeted for degradation. The ribosome is freed to recommence translation, which seems to be the essential function of trans-translation. The protein is SsrA-binding protein of Chlorobium luteolum (strain DSM 273 / BCRC 81028 / 2530) (Pelodictyon luteolum).